A 250-amino-acid chain; its full sequence is tRNA pseudouridine synthase A (250 aa).

The active-site Nucleophile is the Asp52. Position 111 (Tyr111) interacts with substrate.

It belongs to the tRNA pseudouridine synthase TruA family. In terms of assembly, homodimer.

The catalysed reaction is uridine(38/39/40) in tRNA = pseudouridine(38/39/40) in tRNA. Its function is as follows. Formation of pseudouridine at positions 38, 39 and 40 in the anticodon stem and loop of transfer RNAs. This is tRNA pseudouridine synthase A from Methylorubrum extorquens (strain CM4 / NCIMB 13688) (Methylobacterium extorquens).